The primary structure comprises 352 residues: MDEMSNVAKTTTETSGLTDSVLSLTKRMKPTEVTTTTKPALSNTTKFKGVVQQQNGHWGAQIYADHRRIWLGTFKSAHEAAAAYDSASIKLRSFDANSHRNFPWSDFTLHEPDFQECYTTEAVLNMIRDGSYQHKFRDFLRIRSQIVANINIVGSKQVLGGGEGGQESNKCFSCTQLFQKELTPSDVGKLNRLVIPKKYAVKYMPFISDDQSEKETSEGVEDVEVVFYDRAMRQWKFRYCYWRSSQSFVFTRGWNGFVKEKNLKEKDIIVFYTCDVPNNVKTLEGQSKTFLMIDVHHFSGNGFVVPEEVNKTVHEISDEEMKTETLFTSKVEEETKSEEKKGGFMLFGVRIQ.

The segment at 1-20 is disordered; that stretch reads MDEMSNVAKTTTETSGLTDS. Positions 7–20 are enriched in polar residues; the sequence is VAKTTTETSGLTDS. The AP2/ERF DNA-binding region spans 46 to 103; the sequence is KFKGVVQQQNGHWGAQIYADHRRIWLGTFKSAHEAAAAYDSASIKLRSFDANSHRNFP. A DNA-binding region (TF-B3) is located at residues 178-297; it reads FQKELTPSDV…KTFLMIDVHH (120 aa).

Belongs to the AP2/ERF transcription factor family. RAV subfamily.

The protein resides in the nucleus. Probably acts as a transcriptional activator. Binds to the GCC-box pathogenesis-related promoter element. May be involved in the regulation of gene expression by stress factors and by components of stress signal transduction pathways. The polypeptide is AP2/ERF and B3 domain-containing transcription factor At1g51120 (Arabidopsis thaliana (Mouse-ear cress)).